Consider the following 103-residue polypeptide: Co-chaperonin GroES (103 aa).

Belongs to the GroES chaperonin family. In terms of assembly, heptamer of 7 subunits arranged in a ring. Interacts with the chaperonin GroEL.

It is found in the cytoplasm. Its function is as follows. Together with the chaperonin GroEL, plays an essential role in assisting protein folding. The GroEL-GroES system forms a nano-cage that allows encapsulation of the non-native substrate proteins and provides a physical environment optimized to promote and accelerate protein folding. GroES binds to the apical surface of the GroEL ring, thereby capping the opening of the GroEL channel. This chain is Co-chaperonin GroES, found in Synechococcus sp. (strain CC9605).